We begin with the raw amino-acid sequence, 673 residues long: Zinc finger and BTB domain-containing protein 16 (673 aa).

Residues 34-96 enclose the BTB domain; it reads CDVVIMVDSQ…AYTATLQAKA (63 aa). Residues Ser-76, Ser-184, and Ser-197 each carry the phosphoserine; by PDPK1 modification. The interval 200 to 300 is interaction with RUNX1T1; it reads KAAVDSLMTI…SARELHYGRE (101 aa). Disordered regions lie at residues 215-236 and 249-332; these read QGTL…GRHP and DEVP…KHLG. Ser-256 carries the post-translational modification Phosphoserine; by PDPK1. Residue Thr-282 is modified to Phosphothreonine; by PDPK1. Composition is skewed to basic and acidic residues over residues 293-302 and 319-331; these read RELHYGREES and RPEH…EKHL. 8 consecutive C2H2-type zinc fingers follow at residues 404–426, 432–454, 461–483, 490–512, 518–540, 546–568, 574–596, and 602–624; these read EQCS…RKLH, YGCE…LLAH, FVCD…RQTH, VFCL…MEVH, YICS…LRSH, YECE…KRIH, YECN…YRVH, and FECK…LRTH. Ser-628 bears the Phosphoserine; by PDPK1 mark. The C2H2-type 9 zinc-finger motif lies at 630 to 652; sequence YQCTICTEYCPSLSSMQKHMKGH.

The protein belongs to the krueppel C2H2-type zinc-finger protein family. As to quaternary structure, binds EPN1. Interacts with ZBTB32 and CUL3. Interacts with ATP7B. Interacts with transcriptional corepressor RUNX1T1 (via its N-terminus); the interaction increases the transcription repression activity of ZBTB16. Interacts (via C2H2-type zinc finger domains 1 and 2) with RNF112. In terms of tissue distribution, within the hematopoietic system, PLZF is expressed in bone marrow, early myeloid cell lines and peripheral blood mononuclear cells. Also expressed in the ovary, and at lower levels, in the kidney and lung.

It localises to the nucleus. The protein localises to the nuclear body. The protein operates within protein modification; protein ubiquitination. In terms of biological role, acts as a transcriptional repressor. Transcriptional repression may be mediated through recruitment of histone deacetylases to target promoters. May play a role in myeloid maturation and in the development and/or maintenance of other differentiated tissues. Probable substrate-recognition component of an E3 ubiquitin-protein ligase complex which mediates the ubiquitination and subsequent proteasomal degradation of target proteins. This chain is Zinc finger and BTB domain-containing protein 16 (ZBTB16), found in Homo sapiens (Human).